The primary structure comprises 487 residues: GlcNAc-binding protein A (487 aa).

The N-terminal stretch at 1–29 is a signal peptide; the sequence is MKKLPNKSLIALALLSVSGASFGHGYVSA. Positions 30–201 constitute a Chitin-binding type-4 domain; the sequence is YENGVAEGRA…SFYNVIDVKF (172 aa). The Chitin-binding type-3 domain occupies 438–479; the sequence is AGTKVLASDGAVYQCKEFPFSGYCTQWSPSATQFEPGKGSHW.

The protein belongs to the GbpA family.

Its subcellular location is the secreted. In terms of biological role, probably interacts with GlcNAc residues. May promote attachment to both epithelial cell surfaces and chitin. The chain is GlcNAc-binding protein A from Vibrio campbellii (strain ATCC BAA-1116).